A 380-amino-acid polypeptide reads, in one-letter code: GDP-mannose:cellobiosyl-diphosphopolyprenol alpha-mannosyltransferase (380 aa).

It belongs to the glycosyltransferase group 1 family. Glycosyltransferase 4 subfamily.

It catalyses the reaction beta-D-Glc-(1-&gt;4)-alpha-D-Glc-di-trans,octa-cis-undecaprenyl diphosphate + GDP-alpha-D-mannose = alpha-D-Man-(1-&gt;3)-beta-D-Glc-(1-&gt;4)-alpha-D-Glc-1-di-trans,octa-cis-undecaprenyl diphosphate + GDP + H(+). In terms of biological role, involved in the biosynthesis of the exopolysaccharide xanthan, a polymer that is comprised of repeating pentasaccharide units with the structure of a beta-(1,4)-linked D-glucose backbone with trisaccharide side chains composed of mannose-beta-(1,4)-glucuronic acid-beta-(1,2)-mannose attached to alternate glucose residues in the backbone by alpha-(1,3) linkages. Xanthan is involved in pathogenicity but has also been used in a variety of applications as a specialty polymer for commercial applications, including food additives, where they act as viscosifying, stabilizing, emulsifying, or gelling agents. The protein is GDP-mannose:cellobiosyl-diphosphopolyprenol alpha-mannosyltransferase (gumH) of Xanthomonas oryzae pv. oryzae (strain PXO99A).